The following is a 237-amino-acid chain: GrpE protein homolog, mitochondrial (237 aa).

Belongs to the GrpE family. As to quaternary structure, probable component of the PAM complex at least composed of a mitochondrial HSP70 protein, GrpE, tim-44, tim-16 and tim-14/dnj-21.

The protein localises to the mitochondrion matrix. Functionally, essential component of the PAM complex, a complex required for the translocation of transit peptide-containing proteins from the inner membrane into the mitochondrial matrix in an ATP-dependent manner. Seems to control the nucleotide-dependent binding of mitochondrial HSP70 to substrate proteins. This Caenorhabditis elegans protein is GrpE protein homolog, mitochondrial.